Here is a 246-residue protein sequence, read N- to C-terminus: Probable transcriptional regulatory protein CLD_1467 (246 aa).

It belongs to the TACO1 family.

The protein localises to the cytoplasm. In Clostridium botulinum (strain Okra / Type B1), this protein is Probable transcriptional regulatory protein CLD_1467.